Here is a 262-residue protein sequence, read N- to C-terminus: Probable esterase azaC (262 aa).

Catalysis depends on charge relay system residues Ser119, Asp188, and His216.

Belongs to the LovG family.

It functions in the pathway secondary metabolite biosynthesis. Functionally, probable esterase; part of the gene cluster that mediates the biosynthesis of azaphilones, a class of fungal metabolites characterized by a highly oxygenated pyrano-quinone bicyclic core and exhibiting a broad range of bioactivities. In the first step, the non-reducing polyketide synthase azaA forms the hexaketide precursor from successive condensations of five malonyl-CoA units, presumably with a simple acetyl-CoA starter unit. The reactive polyketide chain then undergoes a PT-mediated C2-C7 cyclization to afford the aromatic ring and is eventually released as an aldehyde through the R-domain. The putative ketoreductase azaE is proposed to catalyze the reduction of the terminal ketone resulting in the early culture product FK17-P2a. The monooxygenase azaH was demonstrated to be the only enzyme required to convert FK17-P2a to azanigerone E. AzaH first hydroxylates the benzaldehyde intermediate FK17-P2a at C4, which triggers the formation of the pyran-ring to afford azanigerone E. In parallel, the 2,4-dimethylhexanoyl chain is synthesized by the HR-PKS azaB and is proposed to be transferred to the C4-hydroxyl of azanigerone E by the acyltransferase azaD directly from the ACP domain of azaB. Alternatively, the 2,4-dimethyl-hexanoyl chain may be offloaded from the HR-PKS as a carboxylic acid and converted to an acyl-CoA by azaF. The resulting acyl-CoA molecule could then be taken up as a substrate by AzaD to form azanigerone B. To yield the carboxylic acid substituent in azanigerone A, the hydroxypropyl side chain of azanigerone B would need to undergo a C-C oxidative cleavage catalyzed by cytochrome P450 AzaI. AzaI is proposed to act on a vicinal diol that leads to a C-C bond scission either through an alkoxyradical intermediate or a peroxy complex. In the biosynthesis of azanigerone A, azanigerone B first undergoes hydroxylation at C10, possibly catalyzed by one of the two FAD-dependent monooxygenases encoded in the cluster, azaG or azaL, resulting in the vicinal diol azanigerone C. Oxidative cleavage of azanigerone C by azaI would yield the corresponding aldehyde derivative of azanigerone A. Finally, the dehydrogenase azaJ is proposed to convert the aldehyde functional group into the carboxylic acid, completing the conversion from azanigerone B to azanigerone A. Alternatively, the oxidation of aldehyde to carboxylic acid may be catalyzed by the same P450 enzyme azaI via consecutive oxidation or by endogenous alcohol dehydrogenase. The protein is Probable esterase azaC of Aspergillus niger (strain ATCC 1015 / CBS 113.46 / FGSC A1144 / LSHB Ac4 / NCTC 3858a / NRRL 328 / USDA 3528.7).